Consider the following 197-residue polypeptide: Beta-crystallin A2 (197 aa).

Residues 1-11 form an N-terminal arm region; that stretch reads MSGTLSQGSSP. 2 Beta/gamma crystallin 'Greek key' domains span residues 12-52 and 53-99; these read ARLT…KVES and GAWV…RPLL. The connecting peptide stretch occupies residues 100-105; it reads CANHSD. Beta/gamma crystallin 'Greek key' domains lie at 106–147 and 148–196; these read SRVT…KVTS and GAWV…RRVQ.

The protein belongs to the beta/gamma-crystallin family. As to quaternary structure, homo/heterodimer, or complexes of higher-order. The structure of beta-crystallin oligomers seems to be stabilized through interactions between the N-terminal arms.

Its function is as follows. Crystallins are the dominant structural components of the vertebrate eye lens. The protein is Beta-crystallin A2 (CRYBA2) of Macropus fuliginosus (Western gray kangaroo).